A 341-amino-acid polypeptide reads, in one-letter code: Guanine nucleotide-binding protein subunit beta (341 aa).

7 WD repeats span residues 54–93 (GHLAKIYAMHWASDSRNLVSASQDGKLIVWDGYTTNKVHA), 96–135 (LRSSWVMTCAYAPSGSYVACGGLDNICSIYSLKTREGNVR), 142–180 (GHTGYLSCCRFLDDNQIVTSSGDMSCALWDIETGQQTTA), 183–222 (GHTGDVMSLSLSPDMRTFVSGACDASAKLWDIRDGMCKQT), 225–264 (GHESDINAITYFPNGYAFATGSDDATCRLFDIRADQEIGM), 269–308 (NIICGITSVAFSKSGRLLLGGYDDFNCNVWDVLRQERAGV), and 311–341 (GHDNRVSCLGVTEDGMAVATGSWDSFLRIWN).

Belongs to the WD repeat G protein beta family. G proteins are composed of 3 units, alpha, beta and gamma. The G protein beta1-gamma2 dimer interacts with calmodulin. In terms of tissue distribution, abundantly expressed in gills, gonad and mantle and at lower levels in digestion gland. Not detected in muscle.

The protein localises to the cytoplasm. Functionally, guanine nucleotide-binding proteins (G proteins) are involved as a modulator or transducer in various transmembrane signaling systems. The beta and gamma chains are required for the GTPase activity, for replacement of GDP by GTP, and for G protein-effector interaction. The sequence is that of Guanine nucleotide-binding protein subunit beta from Pinctada fucata (Akoya pearl oyster).